A 1403-amino-acid chain; its full sequence is MNHEVMNLFNPQALAQIFDSIRISIASPENILSWSYGEIKKPETINYRTFKPERDGLFCARIFGPIKDYECLCGKYKRMKYKGIICEKCGVEVTLSRVRRERMGHIELAAPVAHIWFLKSLPGRISTLLDLTLKDIERILYFESYIVTEPGLTSLKLHQLLSEEEYMLAIDKFGEDQFTAMIGAEAIYDLLAGMELDKIANDLHAELAETTSELKQKKLIKRLKIVENFLESGNKPEWMIMKTIPVIPPDLRPLVPLDGGRFATSDLNDLYRRVINRNNRLKRLIELRAPGIIVRNEKRMVQEAVDALFDNGRRGRVITGANKRPLKSLSDMLKGKQGRFRQNLLGKRVDYSGRSVIVTGPELKLHQCGLPKKMALELFKPFIYARLDAKGYSSTVKQAKKLVEKEHPEVWDILDEVIREHPVLLNRAPTLHRLGIQAFEPVLIEGKAIQLHPLVCTAFNADFDGDQMAVHVPLSLEAQLEARVLMMSTNNILHPANGAPIIVPSQDMVLGLYYLSIVSEKEPGEGMAFADMGELHHALENKVVTLHTKIKGRFKNIDKDGKEVAQLYDTTPGRLIIGELLPKNPNISFDIVNQEMTKKNLSKMIDQVYRHCGQKETVVFCDRIMQLGFSHACRAGISFGKDDMVIPESKSRLVAETEALVKEYEQQYDDGLITQGEKYNKVVDAWGKCTDRIADEMMKGIQAVKFDPKTGRQQRMNSIYMMSHSGARGSANQMRQLAGMRGLMAKPSGEIIETPIISNFKEGLTVNEYFNSTHGARKGLADTALKTANSGYLTRRLVDVAQDAIISAVDCGTIKGLTMQPIIDAGQIVASLGQRILGRTALLDILHPVSGEVIIEGGTMIEEADVLKIEEARIQSVQIRSALTCETRLGVCAKCYGRDLARGTPVNQGEAVGVIAAQSIGEPGTQLTMRTFHLGGTAQVVDSSYFESSYEGIVELRNRNVVRNSEGHLVVMGRNMAVLIKDENGKERAVHRISYGARLFVDDGDIIKRGQRIAEWDPYTRPILTEVDGYVGFEDMVDGLSVTETTDESTGITKRQVIDWRVNPRGADLKPAMIIHSDKQGKNIAKLHKGGEARYVMSVETILSVEPGSHVKAGDVIARLPMESAKTKDITGGLPRVAELFEARRPKDHAIIAEISGTVRFGRGYKNKRRIIIEPNDETLEPVEYLIPKGKLFHLQEGDKIEKGDYILDGNPAPHDILAIKGVEALASYLVNEIQEVYRLQGVLINDKHIEVIVRQMLQKVEITESGDSDYIPGDNVDRIELDEINDHLIAEGKKPASGTPILLGITKASLQTPSFISAASFQETTRVLTEAAVSGKIDTLQGLKENVIVGRLIPAGTGGTIAQIRRIATVRDDLIVDEQRKSSNDGISKAMLTDMTANAAAE.

Cysteine 71, cysteine 73, cysteine 86, and cysteine 89 together coordinate Zn(2+). 3 residues coordinate Mg(2+): aspartate 462, aspartate 464, and aspartate 466. Residues cysteine 811, cysteine 885, cysteine 892, and cysteine 895 each coordinate Zn(2+).

It belongs to the RNA polymerase beta' chain family. In terms of assembly, the RNAP catalytic core consists of 2 alpha, 1 beta, 1 beta' and 1 omega subunit. When a sigma factor is associated with the core the holoenzyme is formed, which can initiate transcription. The cofactor is Mg(2+). It depends on Zn(2+) as a cofactor.

It catalyses the reaction RNA(n) + a ribonucleoside 5'-triphosphate = RNA(n+1) + diphosphate. Functionally, DNA-dependent RNA polymerase catalyzes the transcription of DNA into RNA using the four ribonucleoside triphosphates as substrates. The polypeptide is DNA-directed RNA polymerase subunit beta' (Bartonella bacilliformis (strain ATCC 35685 / KC583 / Herrer 020/F12,63)).